Reading from the N-terminus, the 147-residue chain is Hemoglobin subunit beta (147 aa).

The 146-residue stretch at E2–H147 folds into the Globin domain. 2 residues coordinate heme b: H63 and H92.

The protein belongs to the globin family. Heterotetramer of two alpha chains and two beta chains. In terms of tissue distribution, red blood cells.

In terms of biological role, involved in oxygen transport from gills to the various peripheral tissues. The polypeptide is Hemoglobin subunit beta (hbb) (Carassius auratus (Goldfish)).